The following is a 108-amino-acid chain: Mitochondrial import inner membrane translocase subunit tim-13 (108 aa).

Residues 45–68 carry the Twin CX3C motif motif; it reads CTNKCITAPGSSLASGEKQCLQRC. 2 disulfide bridges follow: Cys-45-Cys-68 and Cys-49-Cys-64. The interval 89 to 108 is disordered; the sequence is EEMASSGGMGGGFGQGPSFS. A compositionally biased stretch (gly residues) spans 95–108; sequence GGMGGGFGQGPSFS.

It belongs to the small Tim family. In terms of assembly, heterohexamer; composed of 3 copies of tim-8/ddp-1 and 3 copies of tin-13/tim-13, named soluble 70 kDa complex. Associates with the TIM22 complex, whose core is composed of tim-22.

The protein resides in the mitochondrion inner membrane. Functionally, mitochondrial intermembrane chaperone that participates in the import and insertion of some multi-pass transmembrane proteins into the mitochondrial inner membrane. Also required for the transfer of beta-barrel precursors from the TOM complex to the sorting and assembly machinery (SAM complex) of the outer membrane. Acts as a chaperone-like protein that protects the hydrophobic precursors from aggregation and guide them through the mitochondrial intermembrane space. The tim-8-tim-13 complex mediates the import of some proteins while the predominant tim-9/tin-9.1-tim-10/tin-10 70 kDa complex mediates the import of much more proteins. The protein is Mitochondrial import inner membrane translocase subunit tim-13 (tin-13) of Caenorhabditis elegans.